Consider the following 96-residue polypeptide: Protein RnfH (96 aa).

This sequence belongs to the UPF0125 (RnfH) family.

The polypeptide is Protein RnfH (Escherichia coli O127:H6 (strain E2348/69 / EPEC)).